The following is a 228-amino-acid chain: MFEKKLFFVSCQALKGEALYGKDIVVKLAKAAIQGGAQGLRTSQIKNIKALIRANFNVPIIGIIKQNYPNSDVYISPTLKEMKKLIKTGVQIIAIDATLRKRPKESLNQIVDYFFKHKKSHQLLMADCSSIEDVNNAIKLNFDIIGTTLRGYTEDTKNFSNTDDNYLFLRQVLKICQQNKKYLIAEGGFNSPQNAKDALDIGANAVVVGSAITRPQFITKMFYEKINS.

The protein belongs to the NanE family.

It catalyses the reaction an N-acyl-D-glucosamine 6-phosphate = an N-acyl-D-mannosamine 6-phosphate. The protein operates within amino-sugar metabolism; N-acetylneuraminate degradation; D-fructose 6-phosphate from N-acetylneuraminate: step 3/5. Its function is as follows. Converts N-acetylmannosamine-6-phosphate (ManNAc-6-P) to N-acetylglucosamine-6-phosphate (GlcNAc-6-P). The protein is Putative N-acetylmannosamine-6-phosphate 2-epimerase of Mycoplasmopsis pulmonis (strain UAB CTIP) (Mycoplasma pulmonis).